The chain runs to 133 residues: Ribonuclease P protein component (133 aa).

The protein belongs to the RnpA family. As to quaternary structure, consists of a catalytic RNA component (M1 or rnpB) and a protein subunit.

The enzyme catalyses Endonucleolytic cleavage of RNA, removing 5'-extranucleotides from tRNA precursor.. RNaseP catalyzes the removal of the 5'-leader sequence from pre-tRNA to produce the mature 5'-terminus. It can also cleave other RNA substrates such as 4.5S RNA. The protein component plays an auxiliary but essential role in vivo by binding to the 5'-leader sequence and broadening the substrate specificity of the ribozyme. This is Ribonuclease P protein component from Pseudomonas entomophila (strain L48).